Reading from the N-terminus, the 363-residue chain is 3-dehydroquinate synthase (363 aa).

NAD(+)-binding positions include 134-135 (TT), lysine 147, lysine 156, and 174-177 (TLKT). Residues glutamate 189, histidine 254, and histidine 271 each coordinate Zn(2+).

Belongs to the sugar phosphate cyclases superfamily. Dehydroquinate synthase family. Requires Co(2+) as cofactor. Zn(2+) serves as cofactor. NAD(+) is required as a cofactor.

It localises to the cytoplasm. It catalyses the reaction 7-phospho-2-dehydro-3-deoxy-D-arabino-heptonate = 3-dehydroquinate + phosphate. The protein operates within metabolic intermediate biosynthesis; chorismate biosynthesis; chorismate from D-erythrose 4-phosphate and phosphoenolpyruvate: step 2/7. Functionally, catalyzes the conversion of 3-deoxy-D-arabino-heptulosonate 7-phosphate (DAHP) to dehydroquinate (DHQ). This chain is 3-dehydroquinate synthase, found in Prochlorococcus marinus (strain MIT 9515).